The chain runs to 697 residues: Potassium-transporting ATPase ATP-binding subunit (697 aa).

Transmembrane regions (helical) follow at residues 55-75, 79-99, 245-265, and 271-291; these read PIMF…FLPS, SIPG…VLFA, LTLI…YLGF, and VLVA…LSAI. Residue Asp-324 is the 4-aspartylphosphate intermediate of the active site. ATP is bound by residues Asp-361, Glu-365, 393–400, and Lys-412; that span reads FKAETRMS. Asp-535 and Asp-539 together coordinate Mg(2+). Transmembrane regions (helical) follow at residues 605-625, 633-653, and 677-697; these read FAII…LNIM, AILS…PLAM, and GGVI…GLFI.

It belongs to the cation transport ATPase (P-type) (TC 3.A.3) family. Type IA subfamily. In terms of assembly, the system is composed of three essential subunits: KdpA, KdpB and KdpC.

Its subcellular location is the cell membrane. The enzyme catalyses K(+)(out) + ATP + H2O = K(+)(in) + ADP + phosphate + H(+). Functionally, part of the high-affinity ATP-driven potassium transport (or Kdp) system, which catalyzes the hydrolysis of ATP coupled with the electrogenic transport of potassium into the cytoplasm. This subunit is responsible for energy coupling to the transport system and for the release of the potassium ions to the cytoplasm. In Bacillus anthracis (strain CDC 684 / NRRL 3495), this protein is Potassium-transporting ATPase ATP-binding subunit.